The following is a 302-amino-acid chain: Nucleotide-binding protein SE_0548 (302 aa).

18–25 (GMSGAGKS) contributes to the ATP binding site. 69 to 72 (DLRG) lines the GTP pocket.

It belongs to the RapZ-like family.

Its function is as follows. Displays ATPase and GTPase activities. This chain is Nucleotide-binding protein SE_0548, found in Staphylococcus epidermidis (strain ATCC 12228 / FDA PCI 1200).